Reading from the N-terminus, the 342-residue chain is Methylthioribose-1-phosphate isomerase (342 aa).

Substrate is bound by residues 49 to 51 (RGA), Arg86, and Gln187. Asp228 serves as the catalytic Proton donor. 238-239 (NK) serves as a coordination point for substrate.

This sequence belongs to the eIF-2B alpha/beta/delta subunits family. MtnA subfamily.

It catalyses the reaction 5-(methylsulfanyl)-alpha-D-ribose 1-phosphate = 5-(methylsulfanyl)-D-ribulose 1-phosphate. It participates in amino-acid biosynthesis; L-methionine biosynthesis via salvage pathway; L-methionine from S-methyl-5-thio-alpha-D-ribose 1-phosphate: step 1/6. Functionally, catalyzes the interconversion of methylthioribose-1-phosphate (MTR-1-P) into methylthioribulose-1-phosphate (MTRu-1-P). In Citrobacter koseri (strain ATCC BAA-895 / CDC 4225-83 / SGSC4696), this protein is Methylthioribose-1-phosphate isomerase.